We begin with the raw amino-acid sequence, 1625 residues long: Probable cation-transporting ATPase I (1625 aa).

A run of 8 helical transmembrane segments spans residues 148–168, 177–197, 358–378, 637–657, 673–693, 778–798, 968–988, and 997–1017; these read VVSA…PNSA, LAIL…GATV, LIAA…AGAI, ASES…LLLV, WLNP…WSAA, ILAV…ALLV, LTSK…ALAL, and AVAD…PLVA. The active-site 4-aspartylphosphate intermediate is the aspartate 1053. Residues aspartate 1340 and aspartate 1344 each coordinate Mg(2+). 3 consecutive transmembrane segments (helical) span residues 1401-1421, 1432-1452, and 1547-1567; these read ILVG…AFGA, LLVN…TSQF, and VIAT…TPVI.

The protein belongs to the cation transport ATPase (P-type) (TC 3.A.3) family.

The protein localises to the cell membrane. The enzyme catalyses ATP + H2O = ADP + phosphate + H(+). The sequence is that of Probable cation-transporting ATPase I (ctpI) from Mycobacterium tuberculosis (strain CDC 1551 / Oshkosh).